The primary structure comprises 105 residues: Large ribosomal subunit protein eL30 (105 aa).

It belongs to the eukaryotic ribosomal protein eL30 family.

This is Large ribosomal subunit protein eL30 (rpl30e) from Methanococcus vannielii (strain ATCC 35089 / DSM 1224 / JCM 13029 / OCM 148 / SB).